Here is a 375-residue protein sequence, read N- to C-terminus: Lipid-A-disaccharide synthase (375 aa).

The protein belongs to the LpxB family.

The enzyme catalyses a lipid X + a UDP-2-N,3-O-bis[(3R)-3-hydroxyacyl]-alpha-D-glucosamine = a lipid A disaccharide + UDP + H(+). It participates in bacterial outer membrane biogenesis; LPS lipid A biosynthesis. Functionally, condensation of UDP-2,3-diacylglucosamine and 2,3-diacylglucosamine-1-phosphate to form lipid A disaccharide, a precursor of lipid A, a phosphorylated glycolipid that anchors the lipopolysaccharide to the outer membrane of the cell. The sequence is that of Lipid-A-disaccharide synthase from Pseudomonas putida (strain W619).